The following is a 178-amino-acid chain: Endothelin-2 (178 aa).

Positions 1–24 (MVAVPTAWCSVALALLLALQEGKG) are cleaved as a signal peptide. Positions 25 to 46 (QVAAAPDHPAPSPRARGSHLRP) are excised as a propeptide. 2 disulfide bridges follow: C49–C63 and C51–C59. A propeptide spanning residues 70–178 (VNTPGQTAPY…RPMYPRRRKT (109 aa)) is cleaved from the precursor. An endothelin-like region spans residues 96–111 (CECSSSGDPACATFCH). Residues 158 to 178 (ARQHQEAEREPRPMYPRRRKT) are disordered. Over residues 160 to 169 (QHQEAEREPR) the composition is skewed to basic and acidic residues.

It belongs to the endothelin/sarafotoxin family.

The protein resides in the secreted. Functionally, endothelins are endothelium-derived vasoconstrictor peptides. In Mustela putorius furo (European domestic ferret), this protein is Endothelin-2 (EDN2).